Here is a 156-residue protein sequence, read N- to C-terminus: ATP synthase subunit b (156 aa).

The chain crosses the membrane as a helical span at residues 5–25 (LTLIGQAIAFAFFVAFCMKFV).

Belongs to the ATPase B chain family. As to quaternary structure, F-type ATPases have 2 components, F(1) - the catalytic core - and F(0) - the membrane proton channel. F(1) has five subunits: alpha(3), beta(3), gamma(1), delta(1), epsilon(1). F(0) has three main subunits: a(1), b(2) and c(10-14). The alpha and beta chains form an alternating ring which encloses part of the gamma chain. F(1) is attached to F(0) by a central stalk formed by the gamma and epsilon chains, while a peripheral stalk is formed by the delta and b chains.

The protein localises to the cell inner membrane. F(1)F(0) ATP synthase produces ATP from ADP in the presence of a proton or sodium gradient. F-type ATPases consist of two structural domains, F(1) containing the extramembraneous catalytic core and F(0) containing the membrane proton channel, linked together by a central stalk and a peripheral stalk. During catalysis, ATP synthesis in the catalytic domain of F(1) is coupled via a rotary mechanism of the central stalk subunits to proton translocation. Functionally, component of the F(0) channel, it forms part of the peripheral stalk, linking F(1) to F(0). This Acinetobacter baumannii (strain SDF) protein is ATP synthase subunit b.